The primary structure comprises 288 residues: ATP synthase gamma chain (288 aa).

This sequence belongs to the ATPase gamma chain family. F-type ATPases have 2 components, CF(1) - the catalytic core - and CF(0) - the membrane proton channel. CF(1) has five subunits: alpha(3), beta(3), gamma(1), delta(1), epsilon(1). CF(0) has three main subunits: a, b and c.

Its subcellular location is the cell inner membrane. Its function is as follows. Produces ATP from ADP in the presence of a proton gradient across the membrane. The gamma chain is believed to be important in regulating ATPase activity and the flow of protons through the CF(0) complex. In Blochmanniella pennsylvanica (strain BPEN), this protein is ATP synthase gamma chain.